We begin with the raw amino-acid sequence, 145 residues long: NADH-ubiquinone oxidoreductase subunit 8 (145 aa).

2 4Fe-4S ferredoxin-type domains span residues 43–73 (LRFY…VRVG) and 83–112 (DWFT…HSLF). Residues Cys53, Cys56, Cys59, Cys63, Cys92, Cys95, Cys98, and Cys102 each contribute to the [4Fe-4S] cluster site.

This sequence belongs to the complex I 23 kDa subunit family. Requires [4Fe-4S] cluster as cofactor.

The protein resides in the mitochondrion. It carries out the reaction a ubiquinone + NADH + 5 H(+)(in) = a ubiquinol + NAD(+) + 4 H(+)(out). Core subunit of the mitochondrial membrane respiratory chain NADH dehydrogenase (Complex I) that is believed to belong to the minimal assembly required for catalysis. Complex I functions in the transfer of electrons from NADH to the respiratory chain. The immediate electron acceptor for the enzyme is believed to be ubiquinone. May donate electrons to ubiquinone. The polypeptide is NADH-ubiquinone oxidoreductase subunit 8 (M-ISP1) (Trypanosoma brucei brucei).